Here is a 96-residue protein sequence, read N- to C-terminus: Co-chaperonin GroES (96 aa).

This sequence belongs to the GroES chaperonin family. In terms of assembly, heptamer of 7 subunits arranged in a ring. Interacts with the chaperonin GroEL.

The protein localises to the cytoplasm. Together with the chaperonin GroEL, plays an essential role in assisting protein folding. The GroEL-GroES system forms a nano-cage that allows encapsulation of the non-native substrate proteins and provides a physical environment optimized to promote and accelerate protein folding. GroES binds to the apical surface of the GroEL ring, thereby capping the opening of the GroEL channel. The protein is Co-chaperonin GroES of Polynucleobacter necessarius subsp. necessarius (strain STIR1).